The following is a 274-amino-acid chain: Rhamnulose-1-phosphate aldolase (274 aa).

Glutamate 117 is an active-site residue. Residues histidine 141, histidine 143, and histidine 212 each contribute to the Zn(2+) site.

It belongs to the aldolase class II family. RhaD subfamily. As to quaternary structure, homotetramer. It depends on Zn(2+) as a cofactor.

The protein resides in the cytoplasm. It catalyses the reaction L-rhamnulose 1-phosphate = (S)-lactaldehyde + dihydroxyacetone phosphate. Its pathway is carbohydrate degradation; L-rhamnose degradation; glycerone phosphate from L-rhamnose: step 3/3. Its function is as follows. Catalyzes the reversible cleavage of L-rhamnulose-1-phosphate to dihydroxyacetone phosphate (DHAP) and L-lactaldehyde. This Escherichia coli O45:K1 (strain S88 / ExPEC) protein is Rhamnulose-1-phosphate aldolase.